Consider the following 254-residue polypeptide: Bowman-Birk type bran trypsin inhibitor (254 aa).

The N-terminal stretch at 1-22 (MSNTTMATSTILLFLLAGLAAA) is a signal peptide. Residues 23–118 (HGDGDTTIRL…KCTAALDGLS (96 aa)) constitute a propeptide that is removed on maturation. Repeats lie at residues 46–120 (KPWD…LSME), 121–187 (RPWK…FCTP), and 188–251 (RPWG…CKPR). Intrachain disulfides connect Cys125/Cys185, Cys126/Cys143, Cys152/Cys159, Cys156/Cys172, Cys193/Cys248, Cys194/Cys209, Cys199/Cys207, Cys216/Cys223, and Cys220/Cys236. A propeptide spanning residues 252–254 (AEN) is cleaved from the precursor.

This sequence belongs to the Bowman-Birk serine protease inhibitor family.

The chain is Bowman-Birk type bran trypsin inhibitor (RBBI3.3) from Oryza sativa subsp. japonica (Rice).